The following is a 169-amino-acid chain: uncharacterized protein (169 aa).

A helical membrane pass occupies residues 97 to 117 (IVIFCILVIVAFVIWLVVWLF). Residues 137–169 (NYSGLPTPQPTPTHYPAEQYSYDPARDRDNYRY) are disordered. A compositionally biased stretch (basic and acidic residues) spans 160–169 (PARDRDNYRY).

It localises to the membrane. This is an uncharacterized protein from Caenorhabditis elegans.